The sequence spans 240 residues: Ribonuclease PH (240 aa).

Phosphate-binding positions include arginine 87 and 125 to 127 (GTR).

The protein belongs to the RNase PH family. As to quaternary structure, homohexameric ring arranged as a trimer of dimers.

The enzyme catalyses tRNA(n+1) + phosphate = tRNA(n) + a ribonucleoside 5'-diphosphate. Phosphorolytic 3'-5' exoribonuclease that plays an important role in tRNA 3'-end maturation. Removes nucleotide residues following the 3'-CCA terminus of tRNAs; can also add nucleotides to the ends of RNA molecules by using nucleoside diphosphates as substrates, but this may not be physiologically important. Probably plays a role in initiation of 16S rRNA degradation (leading to ribosome degradation) during starvation. In Pseudomonas syringae pv. tomato (strain ATCC BAA-871 / DC3000), this protein is Ribonuclease PH.